The primary structure comprises 82 residues: ATP synthase subunit c, chloroplastic (82 aa).

2 consecutive transmembrane segments (helical) span residues 7–27 (AASV…PGIG) and 57–77 (LAFM…LLFA).

It belongs to the ATPase C chain family. F-type ATPases have 2 components, F(1) - the catalytic core - and F(0) - the membrane proton channel. F(1) has five subunits: alpha(3), beta(3), gamma(1), delta(1), epsilon(1). F(0) has four main subunits: a(1), b(1), b'(1) and c(10-14). The alpha and beta chains form an alternating ring which encloses part of the gamma chain. F(1) is attached to F(0) by a central stalk formed by the gamma and epsilon chains, while a peripheral stalk is formed by the delta, b and b' chains.

It localises to the plastid. Its subcellular location is the chloroplast thylakoid membrane. In terms of biological role, f(1)F(0) ATP synthase produces ATP from ADP in the presence of a proton or sodium gradient. F-type ATPases consist of two structural domains, F(1) containing the extramembraneous catalytic core and F(0) containing the membrane proton channel, linked together by a central stalk and a peripheral stalk. During catalysis, ATP synthesis in the catalytic domain of F(1) is coupled via a rotary mechanism of the central stalk subunits to proton translocation. Functionally, key component of the F(0) channel; it plays a direct role in translocation across the membrane. A homomeric c-ring of between 10-14 subunits forms the central stalk rotor element with the F(1) delta and epsilon subunits. The sequence is that of ATP synthase subunit c, chloroplastic from Rhodomonas salina (Cryptomonas salina).